A 1134-amino-acid polypeptide reads, in one-letter code: Phospholipid-transporting ATPase IH (1134 aa).

At 1 to 61 (MDCSLVRTLV…SSKYTFWNFI (61 aa)) the chain is on the cytoplasmic side. The helical transmembrane segment at 62-82 (PKNLFEQFRRVANFYFLIIFL) threads the bilayer. The Extracellular segment spans residues 83-88 (VQLIID). Residues 89-110 (TPTSPVTSGLPLFFVITVTAIK) form a helical membrane-spanning segment. The Cytoplasmic portion of the chain corresponds to 111 to 296 (QGYEDWLRHK…SAVEKSMNAF (186 aa)). A helical transmembrane segment spans residues 297 to 318 (LIVYLCILISKALINTVLKYMW). Residues 319-349 (QSEPFRDEPWYNQKTESERQRNLFLKAFTDF) lie on the Extracellular side of the membrane. The chain crosses the membrane as a helical span at residues 350–372 (LAFMVLFNYIIPVSMYVTVEMQK). Residues 373–881 (FLGSYFITWD…GHFYYIRISE (509 aa)) are Cytoplasmic-facing. Asp-414 acts as the 4-aspartylphosphate intermediate in catalysis. ATP contacts are provided by Asp-414, Lys-415, Thr-416, Glu-511, Phe-553, Lys-576, Arg-607, Thr-687, Gly-688, and Asp-689. Asp-414 is a binding site for Mg(2+). Thr-416 is a binding site for Mg(2+). Phosphoserine is present on Ser-738. Positions 798 and 804 each coordinate ATP. Asp-825 is a Mg(2+) binding site. Asn-828 and Asp-829 together coordinate ATP. A Mg(2+)-binding site is contributed by Asp-829. Residues 882 to 902 (LVQYFFYKNVCFIFPQFLYQF) traverse the membrane as a helical segment. The Extracellular segment spans residues 903-914 (FCGFSQQTLYDT). Residues 915 to 934 (AYLTLYNISFTSLPILLYSL) traverse the membrane as a helical segment. The Cytoplasmic portion of the chain corresponds to 935 to 964 (MEQHVGIDVLKRDPTLYRDVAKNALLRWRV). A helical transmembrane segment spans residues 965-986 (FIYWTLLGLFDALVFFFGAYFV). Over 987–1000 (FENTTVTSNGQIFG) the chain is Extracellular. Residues 1001 to 1023 (NWTFGTLVFTVMVFTVTLKLALD) form a helical membrane-spanning segment. Residues 1024 to 1029 (THYWTW) lie on the Cytoplasmic side of the membrane. A helical membrane pass occupies residues 1030–1050 (INHFVIWGSLLFYVVFSLLWG). The Extracellular segment spans residues 1051-1068 (GVIWPFLNYQRMYYVFIQ). Residues 1069–1093 (MLSSGPAWLAIVLLVTISLLPDVLK) form a helical membrane-spanning segment. Over 1094–1134 (KVLCRQLWPTATERVQTKSQCLSVEQSTIFMLSQTSSSLSF) the chain is Cytoplasmic.

The protein belongs to the cation transport ATPase (P-type) (TC 3.A.3) family. Type IV subfamily. In terms of assembly, component of a P4-ATPase flippase complex which consists of a catalytic alpha subunit ATP11A and an accessory beta subunit TMEM30A. Mg(2+) is required as a cofactor. In terms of processing, proteolytically cleaved by CASP3. In terms of tissue distribution, widely expressed. Expressed in myoblasts.

It is found in the cell membrane. Its subcellular location is the early endosome. The protein localises to the recycling endosome. It localises to the endoplasmic reticulum membrane. It carries out the reaction ATP + H2O + phospholipidSide 1 = ADP + phosphate + phospholipidSide 2.. It catalyses the reaction a 1,2-diacyl-sn-glycero-3-phospho-L-serine(out) + ATP + H2O = a 1,2-diacyl-sn-glycero-3-phospho-L-serine(in) + ADP + phosphate + H(+). The catalysed reaction is a 1,2-diacyl-sn-glycero-3-phosphoethanolamine(out) + ATP + H2O = a 1,2-diacyl-sn-glycero-3-phosphoethanolamine(in) + ADP + phosphate + H(+). Its activity is regulated as follows. The flippase activity is inactivated by caspase-mediated cleavage in apoptotic cells, allowing for PS exposure on the cell surface and engulfment of apoptotic cells by macrophages. The ATPase activity is up-regulated by aminophospholipids PS and PE and down-regulated by increasing intracellular Ca2+ levels. In terms of biological role, catalytic component of a P4-ATPase flippase complex which catalyzes the hydrolysis of ATP coupled to the transport of aminophospholipids, phosphatidylserines (PS) and phosphatidylethanolamines (PE), from the outer to the inner leaflet of the plasma membrane. Does not show flippase activity toward phosphatidylcholine (PC). Contributes to the maintenance of membrane lipid asymmetry with a specific role in morphogenesis of muscle cells. In myoblasts, mediates PS enrichment at the inner leaflet of plasma membrane, triggering PIEZO1-dependent Ca2+ influx and Rho GTPases signal transduction, subsequently leading to the assembly of cortical actomyosin fibers and myotube formation. May be involved in the uptake of farnesyltransferase inhibitor drugs, such as lonafarnib. The sequence is that of Phospholipid-transporting ATPase IH (ATP11A) from Homo sapiens (Human).